The following is a 368-amino-acid chain: Anti-sigma-X factor RsiX (368 aa).

Over residues 73–87 (QPQQKEASQENAVTK) the composition is skewed to polar residues. The tract at residues 73–101 (QPQQKEASQENAVTKTETEDSPKAASSLD) is disordered.

It localises to the cell membrane. Its function is as follows. The anti-sigma factor for extracytoplasmic function (ECF) sigma factor SigX, inhibits SigX activity and stabilizes it. In Bacillus subtilis (strain 168), this protein is Anti-sigma-X factor RsiX (rsiX).